Consider the following 357-residue polypeptide: Non-structural protein NS2 (357 aa).

Disordered stretches follow at residues 169–191 (PRLQ…DEAK) and 229–266 (DERD…HPKT). Residues 233–249 (EGDRDERGDEEQVKTLS) show a composition bias toward basic and acidic residues. Acidic residues predominate over residues 250-260 (DDDDQGEDASD).

Belongs to the orbivirus non-structural protein NS2 family.

Its function is as follows. Single-stranded RNA-binding protein. The chain is Non-structural protein NS2 (Segment-8) from Antilocapra americana (Pronghorn).